The chain runs to 357 residues: UDP-N-acetylglucosamine--N-acetylmuramyl-(pentapeptide) pyrophosphoryl-undecaprenol N-acetylglucosamine transferase (357 aa).

Residues 15–17 (TGG), N123, R164, S190, and Q284 each bind UDP-N-acetyl-alpha-D-glucosamine.

This sequence belongs to the glycosyltransferase 28 family. MurG subfamily.

It is found in the cell inner membrane. It catalyses the reaction di-trans,octa-cis-undecaprenyl diphospho-N-acetyl-alpha-D-muramoyl-L-alanyl-D-glutamyl-meso-2,6-diaminopimeloyl-D-alanyl-D-alanine + UDP-N-acetyl-alpha-D-glucosamine = di-trans,octa-cis-undecaprenyl diphospho-[N-acetyl-alpha-D-glucosaminyl-(1-&gt;4)]-N-acetyl-alpha-D-muramoyl-L-alanyl-D-glutamyl-meso-2,6-diaminopimeloyl-D-alanyl-D-alanine + UDP + H(+). The protein operates within cell wall biogenesis; peptidoglycan biosynthesis. Its function is as follows. Cell wall formation. Catalyzes the transfer of a GlcNAc subunit on undecaprenyl-pyrophosphoryl-MurNAc-pentapeptide (lipid intermediate I) to form undecaprenyl-pyrophosphoryl-MurNAc-(pentapeptide)GlcNAc (lipid intermediate II). In Synechococcus elongatus (strain ATCC 33912 / PCC 7942 / FACHB-805) (Anacystis nidulans R2), this protein is UDP-N-acetylglucosamine--N-acetylmuramyl-(pentapeptide) pyrophosphoryl-undecaprenol N-acetylglucosamine transferase.